A 75-amino-acid chain; its full sequence is UPF0346 protein OB1736 (75 aa).

The protein belongs to the UPF0346 family.

This chain is UPF0346 protein OB1736, found in Oceanobacillus iheyensis (strain DSM 14371 / CIP 107618 / JCM 11309 / KCTC 3954 / HTE831).